The primary structure comprises 445 residues: UPF0210 protein SPJ_0248 (445 aa).

Belongs to the UPF0210 family. Homodimer.

The chain is UPF0210 protein SPJ_0248 from Streptococcus pneumoniae (strain JJA).